The sequence spans 369 residues: Biglycan (369 aa).

An N-terminal signal peptide occupies residues 1 to 16 (MCPLWLLAALLALSQA). Positions 17–37 (LPFEQKAFWDFTLDDGLPMLN) are excised as a propeptide. Ser-42 and Ser-48 each carry an O-linked (Xyl...) (glycosaminoglycan) serine glycan. Disulfide bonds link Cys-64–Cys-70 and Cys-68–Cys-77. LRR repeat units lie at residues 83–103 (KAVPKEISPDTTLLDLQNNDI), 104–127 (SELRKDDFKGLQHLYALVLVNNKI), 128–151 (SKIHEKAFSPLRKLQKLYISKNHL), 152–172 (VEIPPNLPSSLVELRIHDNRI), 173–196 (RKVPKGVFSGLRNMNCIEMGGNPL), 197–221 (ENSGFEPGAFDGLKLNYLRISEAKL), 222–242 (TGIPKDLPETLNELHLDHNKI), 243–266 (QAIELEDLLRYSKLYRLGLGHNQI), 267–290 (RMIENGSLSFLPTLRELHLDNNKL), 291–313 (SRVPAGLPDLKLLQVVYLHTNNI), 314–343 (TKVGVNDFCPVGFGVKRAYYNGISLFNNPV), and 344–369 (PYWEVQPATFRCVTDRLAIQFGNYKK). Residues Asn-271 and Asn-312 are each glycosylated (N-linked (GlcNAc...) asparagine). Cys-322 and Cys-355 form a disulfide bridge.

It belongs to the small leucine-rich proteoglycan (SLRP) family. SLRP class I subfamily. Homodimer. Forms a ternary complex with MFAP2 and ELN. Post-translationally, the two attached glycosaminoglycan chains can be either chondroitin sulfate or dermatan sulfate. As to expression, found in several connective tissues, especially in articular cartilages.

It localises to the secreted. The protein localises to the extracellular space. The protein resides in the extracellular matrix. Functionally, may be involved in collagen fiber assembly. This Ovis aries (Sheep) protein is Biglycan (BGN).